Consider the following 31-residue polypeptide: Cyclotide hyen-J (31 aa).

Residues 1–31 (GSVPCGESCVWIPCITSIAGCSCSNKVCYMD) constitute a cross-link (cyclopeptide (Gly-Asp)). 3 disulfides stabilise this stretch: C5-C21, C9-C23, and C14-C28.

This is a cyclic peptide. In terms of tissue distribution, detected in seeds (at protein level).

Probably participates in a plant defense mechanism. The protein is Cyclotide hyen-J of Pigea enneasperma (Spade flower).